Consider the following 915-residue polypeptide: Metabotropic glutamate receptor 7 (915 aa).

The signal sequence occupies residues 1-34 (MVQLRKLLRVLTLMKFPCCVLEVLLCALAAAARG). Residues 35 to 590 (QEMYAPHSIR…IIKLEWHSPW (556 aa)) are Extracellular-facing. Cysteine 67 and cysteine 109 are disulfide-bonded. Residue asparagine 98 is glycosylated (N-linked (GlcNAc...) asparagine). L-glutamate contacts are provided by residues serine 159, 180–182 (AST), tyrosine 230, and aspartate 314. 7 cysteine pairs are disulfide-bonded: cysteine 249–cysteine 541, cysteine 374–cysteine 390, cysteine 430–cysteine 437, cysteine 523–cysteine 542, cysteine 527–cysteine 545, cysteine 548–cysteine 560, and cysteine 563–cysteine 576. Lysine 407 is an L-glutamate binding site. 2 N-linked (GlcNAc...) asparagine glycosylation sites follow: asparagine 458 and asparagine 486. The N-linked (GlcNAc...) asparagine glycan is linked to asparagine 572. The helical transmembrane segment at 591–615 (AVIPVFLAMLGIIATIFVMATFIRY) threads the bilayer. Residues 616 to 627 (NDTPIVRASGRE) lie on the Cytoplasmic side of the membrane. Residues 628 to 648 (LSYVLLTGIFLCYIITFLMIA) form a helical membrane-spanning segment. Over 649–654 (KPDVAV) the chain is Extracellular. Residues 655 to 675 (CSFRRVFLGLGMCISYAALLT) traverse the membrane as a helical segment. Residues 676 to 702 (KTNRIYRIFEQGKKSVTAPRLISPTSQ) lie on the Cytoplasmic side of the membrane. Residues 703 to 723 (LAITSSLISVQLLGVFIWFGV) traverse the membrane as a helical segment. Residues 724–753 (DPPNIIIDYDEHKTMNPEQARGVLKCDITD) lie on the Extracellular side of the membrane. A helical transmembrane segment spans residues 754 to 775 (LQIICSLGYSILLMVTCTVYAI). The Cytoplasmic segment spans residues 776 to 788 (KTRGVPENFNEAK). The helical transmembrane segment at 789-810 (PIGFTMYTTCIVWLAFIPIFFG) threads the bilayer. Topologically, residues 811 to 825 (TAQSAEKLYIQTTTL) are extracellular. Residues 826-850 (TISMNLSASVALGMLYMPKVYIIIF) traverse the membrane as a helical segment. Residues 851 to 915 (HPELNVQKRK…KYVSYNNLVI (65 aa)) are Cytoplasmic-facing. The tract at residues 874–895 (SRLSHKPSDRPNGEAKTELCEN) is disordered. Basic and acidic residues predominate over residues 879–892 (KPSDRPNGEAKTEL). The residue at position 900 (serine 900) is a Phosphoserine.

This sequence belongs to the G-protein coupled receptor 3 family. In terms of assembly, homodimer. Interacts with PICK1. In terms of processing, N-glycosylated. In terms of tissue distribution, expressed in many areas of the brain, especially in the cerebral cortex, hippocampus, and cerebellum. Expression of GRM7 isoforms in non-neuronal tissues appears to be restricted to isoform 3 and isoform 4.

Its subcellular location is the cell membrane. G-protein coupled receptor activated by glutamate that regulates axon outgrowth through the MAPK-cAMP-PKA signaling pathway during neuronal development. Ligand binding causes a conformation change that triggers signaling via guanine nucleotide-binding proteins (G proteins) and modulates the activity of downstream effectors, such as adenylate cyclase that it inhibits. The sequence is that of Metabotropic glutamate receptor 7 (GRM7) from Homo sapiens (Human).